Here is a 92-residue protein sequence, read N- to C-terminus: Small ribosomal subunit protein bS18 (92 aa).

Belongs to the bacterial ribosomal protein bS18 family. As to quaternary structure, part of the 30S ribosomal subunit. Forms a tight heterodimer with protein bS6.

In terms of biological role, binds as a heterodimer with protein bS6 to the central domain of the 16S rRNA, where it helps stabilize the platform of the 30S subunit. The chain is Small ribosomal subunit protein bS18 from Chlorobium chlorochromatii (strain CaD3).